The primary structure comprises 431 residues: Trigger factor (431 aa).

The PPIase FKBP-type domain maps to 158–243; sequence GDLVAVETWS…VAEVSEPVVP (86 aa).

Belongs to the FKBP-type PPIase family. Tig subfamily.

The protein resides in the cytoplasm. The catalysed reaction is [protein]-peptidylproline (omega=180) = [protein]-peptidylproline (omega=0). In terms of biological role, involved in protein export. Acts as a chaperone by maintaining the newly synthesized protein in an open conformation. Functions as a peptidyl-prolyl cis-trans isomerase. The sequence is that of Trigger factor from Stenotrophomonas maltophilia (strain K279a).